The primary structure comprises 307 residues: Alginate lyase (307 aa).

The signal sequence occupies residues 1–20; sequence MLKSGVMVASLCLFSVPSRA.

Belongs to the polysaccharide lyase 7 family.

It is found in the secreted. The enzyme catalyses Eliminative cleavage of alginate to give oligosaccharides with 4-deoxy-alpha-L-erythro-hex-4-enuronosyl groups at their non-reducing ends and beta-D-mannuronate at their reducing end.. Degrades alginates that contain guluronic acid. This is Alginate lyase (alyA) from Klebsiella pneumoniae.